The sequence spans 364 residues: Mannose-1-phosphate guanyltransferase (364 aa).

This sequence belongs to the transferase hexapeptide repeat family.

It localises to the cytoplasm. The enzyme catalyses alpha-D-mannose 1-phosphate + GTP + H(+) = GDP-alpha-D-mannose + diphosphate. Its pathway is nucleotide-sugar biosynthesis; GDP-alpha-D-mannose biosynthesis; GDP-alpha-D-mannose from alpha-D-mannose 1-phosphate (GTP route): step 1/1. In terms of biological role, involved in cell wall synthesis where it is required for glycosylation. Involved in cell cycle progression through cell-size checkpoint. This Cryptococcus neoformans var. neoformans serotype D (strain B-3501A) (Filobasidiella neoformans) protein is Mannose-1-phosphate guanyltransferase (MPG1).